We begin with the raw amino-acid sequence, 141 residues long: Nucleoside diphosphate kinase (141 aa).

Lys11, Phe59, Arg87, Thr93, Arg104, and Asn114 together coordinate ATP. His117 (pros-phosphohistidine intermediate) is an active-site residue.

Belongs to the NDK family. In terms of assembly, homotetramer. Mg(2+) serves as cofactor.

It localises to the cytoplasm. It carries out the reaction a 2'-deoxyribonucleoside 5'-diphosphate + ATP = a 2'-deoxyribonucleoside 5'-triphosphate + ADP. The enzyme catalyses a ribonucleoside 5'-diphosphate + ATP = a ribonucleoside 5'-triphosphate + ADP. Major role in the synthesis of nucleoside triphosphates other than ATP. The ATP gamma phosphate is transferred to the NDP beta phosphate via a ping-pong mechanism, using a phosphorylated active-site intermediate. This chain is Nucleoside diphosphate kinase, found in Pseudomonas syringae pv. tomato (strain ATCC BAA-871 / DC3000).